The sequence spans 230 residues: UPF0173 metal-dependent hydrolase LI0883 (230 aa).

The protein belongs to the UPF0173 family.

The polypeptide is UPF0173 metal-dependent hydrolase LI0883 (Lawsonia intracellularis (strain PHE/MN1-00)).